A 466-amino-acid polypeptide reads, in one-letter code: Cysteine--tRNA ligase (466 aa).

Cys30 serves as a coordination point for Zn(2+). A 'HIGH' region motif is present at residues 32–42; the sequence is PTVYNYIHIGN. Zn(2+)-binding residues include Cys210, His235, and Glu239. A 'KMSKS' region motif is present at residues 267-271; that stretch reads KMSKS. Lys270 is a binding site for ATP. Residue Ser271 is modified to Phosphoserine.

The protein belongs to the class-I aminoacyl-tRNA synthetase family. Monomer. It depends on Zn(2+) as a cofactor.

The protein resides in the cytoplasm. The enzyme catalyses tRNA(Cys) + L-cysteine + ATP = L-cysteinyl-tRNA(Cys) + AMP + diphosphate. In Geobacillus sp. (strain WCH70), this protein is Cysteine--tRNA ligase.